Here is a 441-residue protein sequence, read N- to C-terminus: Deoxyguanosinetriphosphate triphosphohydrolase-like protein (441 aa).

The 194-residue stretch at 62–255 (RLTHSLEAAQ…MELADDIAYG (194 aa)) folds into the HD domain.

It belongs to the dGTPase family. Type 2 subfamily.

The protein is Deoxyguanosinetriphosphate triphosphohydrolase-like protein (dgt) of Vibrio cholerae serotype O1 (strain ATCC 39541 / Classical Ogawa 395 / O395).